A 123-amino-acid chain; its full sequence is Small ribosomal subunit protein uS12 (123 aa).

The residue at position 89 (D89) is a 3-methylthioaspartic acid.

It belongs to the universal ribosomal protein uS12 family. In terms of assembly, part of the 30S ribosomal subunit. Contacts proteins S8 and S17. May interact with IF1 in the 30S initiation complex.

In terms of biological role, with S4 and S5 plays an important role in translational accuracy. Interacts with and stabilizes bases of the 16S rRNA that are involved in tRNA selection in the A site and with the mRNA backbone. Located at the interface of the 30S and 50S subunits, it traverses the body of the 30S subunit contacting proteins on the other side and probably holding the rRNA structure together. The combined cluster of proteins S8, S12 and S17 appears to hold together the shoulder and platform of the 30S subunit. In Rhizobium etli (strain ATCC 51251 / DSM 11541 / JCM 21823 / NBRC 15573 / CFN 42), this protein is Small ribosomal subunit protein uS12.